A 1184-amino-acid chain; its full sequence is DNA-directed RNA polymerase subunit beta (1184 aa).

Positions 1160–1184 (DDDFTNQNDAFNIVQPENAAAEKTE) are disordered.

This sequence belongs to the RNA polymerase beta chain family. In terms of assembly, the RNAP catalytic core consists of 2 alpha, 1 beta, 1 beta' and 1 omega subunit. When a sigma factor is associated with the core the holoenzyme is formed, which can initiate transcription.

It catalyses the reaction RNA(n) + a ribonucleoside 5'-triphosphate = RNA(n+1) + diphosphate. In terms of biological role, DNA-dependent RNA polymerase catalyzes the transcription of DNA into RNA using the four ribonucleoside triphosphates as substrates. In Listeria welshimeri serovar 6b (strain ATCC 35897 / DSM 20650 / CCUG 15529 / CIP 8149 / NCTC 11857 / SLCC 5334 / V8), this protein is DNA-directed RNA polymerase subunit beta.